A 311-amino-acid chain; its full sequence is Protein nfe2 (311 aa).

Responsible for the nodulation efficiency and competitive ability of strain GR4 on alfalfa roots. This is Protein nfe2 (nfe2) from Rhizobium meliloti (Ensifer meliloti).